A 647-amino-acid chain; its full sequence is Threonine--tRNA ligase (647 aa).

The region spanning 1–61 (MINITFPDGA…TEDGSIEIVT (61 aa)) is the TGS domain. Residues 242-540 (DHRKLGKELD…LIENYKGAFP (299 aa)) form a catalytic region. Residues Cys-336, His-387, and His-517 each contribute to the Zn(2+) site.

The protein belongs to the class-II aminoacyl-tRNA synthetase family. Homodimer. Requires Zn(2+) as cofactor.

Its subcellular location is the cytoplasm. It carries out the reaction tRNA(Thr) + L-threonine + ATP = L-threonyl-tRNA(Thr) + AMP + diphosphate + H(+). Its function is as follows. Catalyzes the attachment of threonine to tRNA(Thr) in a two-step reaction: L-threonine is first activated by ATP to form Thr-AMP and then transferred to the acceptor end of tRNA(Thr). Also edits incorrectly charged L-seryl-tRNA(Thr). The polypeptide is Threonine--tRNA ligase (Streptococcus pneumoniae serotype 19F (strain G54)).